Consider the following 220-residue polypeptide: Glycerol-3-phosphate acyltransferase (220 aa).

Helical transmembrane passes span I11–L31, L70–F90, L96–F116, G127–V147, I153–P173, and M193–A213.

The protein belongs to the PlsY family. Probably interacts with PlsX.

It localises to the cell inner membrane. It catalyses the reaction an acyl phosphate + sn-glycerol 3-phosphate = a 1-acyl-sn-glycero-3-phosphate + phosphate. Its pathway is lipid metabolism; phospholipid metabolism. Its function is as follows. Catalyzes the transfer of an acyl group from acyl-phosphate (acyl-PO(4)) to glycerol-3-phosphate (G3P) to form lysophosphatidic acid (LPA). This enzyme utilizes acyl-phosphate as fatty acyl donor, but not acyl-CoA or acyl-ACP. The polypeptide is Glycerol-3-phosphate acyltransferase (Helicobacter pylori (strain ATCC 700392 / 26695) (Campylobacter pylori)).